The following is a 447-amino-acid chain: Methylenetetrahydrofolate--tRNA-(uracil-5-)-methyltransferase TrmFO (447 aa).

9-14 (GGGLAG) contacts FAD.

It belongs to the MnmG family. TrmFO subfamily. FAD serves as cofactor.

It is found in the cytoplasm. It carries out the reaction uridine(54) in tRNA + (6R)-5,10-methylene-5,6,7,8-tetrahydrofolate + NADH + H(+) = 5-methyluridine(54) in tRNA + (6S)-5,6,7,8-tetrahydrofolate + NAD(+). It catalyses the reaction uridine(54) in tRNA + (6R)-5,10-methylene-5,6,7,8-tetrahydrofolate + NADPH + H(+) = 5-methyluridine(54) in tRNA + (6S)-5,6,7,8-tetrahydrofolate + NADP(+). In terms of biological role, catalyzes the folate-dependent formation of 5-methyl-uridine at position 54 (M-5-U54) in all tRNAs. This chain is Methylenetetrahydrofolate--tRNA-(uracil-5-)-methyltransferase TrmFO, found in Paramagnetospirillum magneticum (strain ATCC 700264 / AMB-1) (Magnetospirillum magneticum).